The following is a 374-amino-acid chain: MNYQLITTDDGLSEVCSQARRMPQVALDTEFVRTRTYYPQLGLIQLFDGERLSLIDPLSITVWQPFCDLLLDPAVTKYLHAGSEDLEVFLNAFGLLPTPFVDTQILVAFLGKPLSYGFAALVADYMQVTLDKSESRTDWLARPLSEKQCQYAAADVYYLLPMAIRLVEETTSAGWWEAALDECRQLCQRKQDVLAPEQAYREIGNAWQLKGRHLACLQKLADWRLRKARERDSAVNFIVREEHLGQVARYLPGSLGELGALGLSGPEIRYHGKTLLELVAETQTMDAAEYPEPVINLIDYPGYKKAFREIKDLVQQQAERSGLSAELLASRRQINRLLSWHWKLAPQTHVPELLSGWRGRLFGEPLKGILANYI.

In terms of domain architecture, 3'-5' exonuclease spans 3-171; the sequence is YQLITTDDGL…MAIRLVEETT (169 aa). The HRDC domain maps to 210–289; the sequence is KGRHLACLQK…AETQTMDAAE (80 aa).

Belongs to the RNase D family. A divalent metal cation serves as cofactor.

It localises to the cytoplasm. The enzyme catalyses Exonucleolytic cleavage that removes extra residues from the 3'-terminus of tRNA to produce 5'-mononucleotides.. Exonuclease involved in the 3' processing of various precursor tRNAs. Initiates hydrolysis at the 3'-terminus of an RNA molecule and releases 5'-mononucleotides. This chain is Ribonuclease D, found in Musicola paradisiaca (strain Ech703) (Dickeya paradisiaca).